The chain runs to 64 residues: Large ribosomal subunit protein bL35 (64 aa).

Residues Gly-18–Asn-39 are disordered. The segment covering Pro-26 to Asn-39 has biased composition (basic residues).

This sequence belongs to the bacterial ribosomal protein bL35 family.

The chain is Large ribosomal subunit protein bL35 from Symbiobacterium thermophilum (strain DSM 24528 / JCM 14929 / IAM 14863 / T).